The following is a 343-amino-acid chain: UDP-3-O-acylglucosamine N-acyltransferase (343 aa).

The active-site Proton acceptor is His-248.

It belongs to the transferase hexapeptide repeat family. LpxD subfamily. In terms of assembly, homotrimer.

It catalyses the reaction a UDP-3-O-[(3R)-3-hydroxyacyl]-alpha-D-glucosamine + a (3R)-hydroxyacyl-[ACP] = a UDP-2-N,3-O-bis[(3R)-3-hydroxyacyl]-alpha-D-glucosamine + holo-[ACP] + H(+). It participates in bacterial outer membrane biogenesis; LPS lipid A biosynthesis. In terms of biological role, catalyzes the N-acylation of UDP-3-O-acylglucosamine using 3-hydroxyacyl-ACP as the acyl donor. Is involved in the biosynthesis of lipid A, a phosphorylated glycolipid that anchors the lipopolysaccharide to the outer membrane of the cell. In Microcystis aeruginosa (strain NIES-843 / IAM M-2473), this protein is UDP-3-O-acylglucosamine N-acyltransferase.